We begin with the raw amino-acid sequence, 131 residues long: Small ribosomal subunit protein bS6 (131 aa).

Residues 96–131 (VTEASPMVKAKDERRERRDDFANETADDAEAGDSEE) form a disordered region. Residues 104–116 (KAKDERRERRDDF) show a composition bias toward basic and acidic residues. The segment covering 120 to 131 (TADDAEAGDSEE) has biased composition (acidic residues).

The protein belongs to the bacterial ribosomal protein bS6 family.

Binds together with bS18 to 16S ribosomal RNA. This Salmonella arizonae (strain ATCC BAA-731 / CDC346-86 / RSK2980) protein is Small ribosomal subunit protein bS6.